The following is a 638-amino-acid chain: MGDVEELKFSAEVGKVLSLVVHSLYTNKDIFLREVISNASDACDKLRYLFCSDQSLMEAGEELRIVISVDRDRRELTVRDNGIGMSRKELIDNLGTIASSGTQRFLEEFKGGKAQGCDLIGKFGVGFYSVFMVATDVVVESCKAGEKVGHRWQSSGDGVFSVSTIEGDVSRGTKVILTLREDEFDFLDKFRIEHIVTTYSDHVGYPIYLIASDGTEEKLNSGVAIWTKPKDEISESEHMEFFRSISHIGSNPWMVIHNKNEGTIEYINLLYVPSVKPFDLFHPDRRCSVKLYVNRVFITEDNVQVIPQYMRFLRGVIDSSDLPLNISRETLQNNMVIEKIKASVTRRVLTSLREKADSDPVSYKTFWENFGPVLKEGLCEAMDTESRESILSVCRFYSSNSKEGELISLGDYISRMKPGQEHIFYLSGNDLESAMRSPQIEGMVSNGIEVVLLVDPVDDFWTSVVLEYKGVPFKSVTRVDESDLEKFTEGDDQQSTKKKKEKKDTDDAQQKENVEAFIDYMKKVLGDSVSDIKVSRKLTTSLVCLAVPEHALDIRMERFLREQKQLSYKGSRILELNIKHPVLSGLLREYKDNGESELLENMVHVLFDQACIIEGEEVNSAVDFANRMNQVLARLFKK.

Positions 1–328 (MGDVEELKFS…SSDLPLNISR (328 aa)) are a; substrate-binding. The segment at 329 to 558 (ETLQNNMVIE…EHALDIRMER (230 aa)) is b. The disordered stretch occupies residues 484–508 (LEKFTEGDDQQSTKKKKEKKDTDDA). A c region spans residues 559-638 (FLREQKQLSY…NQVLARLFKK (80 aa)).

This sequence belongs to the heat shock protein 90 family. Homodimer.

It localises to the cytoplasm. Molecular chaperone. Has ATPase activity. The chain is Chaperone protein HtpG from Anaplasma marginale (strain St. Maries).